Consider the following 339-residue polypeptide: O-methyltransferase 7 (339 aa).

5 residues coordinate S-adenosyl-L-methionine: Gly-186, Asp-209, Ser-232, Phe-233, and Lys-246. The active-site Proton acceptor is the His-250.

The protein belongs to the class I-like SAM-binding methyltransferase superfamily. Cation-independent O-methyltransferase family. COMT subfamily.

The catalysed reaction is (3,5-dichloro-2,4,6-trihydroxyphenyl)hexan-1-one + S-adenosyl-L-methionine = 1-(3,5-dichloro-2,6-dihydroxy-4-methoxyphenyl)hexan-1-one + S-adenosyl-L-homocysteine + H(+). This Dictyostelium discoideum (Social amoeba) protein is O-methyltransferase 7 (omt7).